The chain runs to 639 residues: Chaperone protein DnaK (639 aa).

A Phosphothreonine; by autocatalysis modification is found at Thr-198. Residues Ala-601–Lys-639 are disordered. Over residues Ala-622–Lys-639 the composition is skewed to basic and acidic residues.

The protein belongs to the heat shock protein 70 family.

Acts as a chaperone. The protein is Chaperone protein DnaK of Trichlorobacter lovleyi (strain ATCC BAA-1151 / DSM 17278 / SZ) (Geobacter lovleyi).